We begin with the raw amino-acid sequence, 260 residues long: Ubiquinone/menaquinone biosynthesis C-methyltransferase UbiE (260 aa).

Residues threonine 83, aspartate 104, and 132 to 133 (NA) contribute to the S-adenosyl-L-methionine site.

It belongs to the class I-like SAM-binding methyltransferase superfamily. MenG/UbiE family.

The enzyme catalyses a 2-demethylmenaquinol + S-adenosyl-L-methionine = a menaquinol + S-adenosyl-L-homocysteine + H(+). It catalyses the reaction a 2-methoxy-6-(all-trans-polyprenyl)benzene-1,4-diol + S-adenosyl-L-methionine = a 5-methoxy-2-methyl-3-(all-trans-polyprenyl)benzene-1,4-diol + S-adenosyl-L-homocysteine + H(+). It functions in the pathway quinol/quinone metabolism; menaquinone biosynthesis; menaquinol from 1,4-dihydroxy-2-naphthoate: step 2/2. Its pathway is cofactor biosynthesis; ubiquinone biosynthesis. Its function is as follows. Methyltransferase required for the conversion of demethylmenaquinol (DMKH2) to menaquinol (MKH2) and the conversion of 2-polyprenyl-6-methoxy-1,4-benzoquinol (DDMQH2) to 2-polyprenyl-3-methyl-6-methoxy-1,4-benzoquinol (DMQH2). The sequence is that of Ubiquinone/menaquinone biosynthesis C-methyltransferase UbiE from Bartonella tribocorum (strain CIP 105476 / IBS 506).